Consider the following 347-residue polypeptide: Glycerol-1-phosphate dehydrogenase [NAD(P)+] (347 aa).

Residues 90–94 and 112–115 contribute to the NAD(+) site; these read GRPVD and TAIS. Asp117 contributes to the substrate binding site. Ser121 provides a ligand contact to NAD(+). Asp165 is a binding site for substrate. Asp165 and His245 together coordinate Zn(2+). His249 provides a ligand contact to substrate. A Zn(2+)-binding site is contributed by His262.

This sequence belongs to the glycerol-1-phosphate dehydrogenase family. Homodimer. Requires Zn(2+) as cofactor.

It is found in the cytoplasm. It catalyses the reaction sn-glycerol 1-phosphate + NAD(+) = dihydroxyacetone phosphate + NADH + H(+). The catalysed reaction is sn-glycerol 1-phosphate + NADP(+) = dihydroxyacetone phosphate + NADPH + H(+). It participates in membrane lipid metabolism; glycerophospholipid metabolism. In terms of biological role, catalyzes the NAD(P)H-dependent reduction of dihydroxyacetonephosphate (DHAP or glycerone phosphate) to glycerol 1-phosphate (G1P). The G1P thus generated is used as the glycerophosphate backbone of phospholipids in the cellular membranes of Archaea. This chain is Glycerol-1-phosphate dehydrogenase [NAD(P)+], found in Thermofilum pendens (strain DSM 2475 / Hrk 5).